We begin with the raw amino-acid sequence, 164 residues long: MPELLKQRVETCYQQAETFFKRPFPRPQVSFKLRGQKAGVAHLHENLLRFNLQLYRENQDDFLRQTVAHEVAHLVAHQLFGDKIQAHGEEWQLIMRGVYELPPNRCHNYEVQRRVATRYIYRCPCPESDFPFTAQRHKLVRQGRRYLCRRCREILVYSGETRVE.

Residues glutamine 14–valine 156 enclose the SprT-like domain. Position 69 (histidine 69) interacts with Zn(2+). Glutamate 70 is an active-site residue. Histidine 73 serves as a coordination point for Zn(2+).

It belongs to the SprT family. Zn(2+) is required as a cofactor.

The protein resides in the cytoplasm. This chain is Protein SprT, found in Pseudomonas entomophila (strain L48).